The following is a 75-amino-acid chain: Sec-independent protein translocase protein TatA (75 aa).

Residues 1 to 21 (MGSFSIWHWLIVLVIVVLVFG) traverse the membrane as a helical segment. Composition is skewed to basic and acidic residues over residues 43–54 (MRDSEKSGEDVQ) and 66–75 (ATDKSHTVSH). Residues 43-75 (MRDSEKSGEDVQQKIGGDTLDAQATDKSHTVSH) are disordered.

The protein belongs to the TatA/E family. In terms of assembly, the Tat system comprises two distinct complexes: a TatABC complex, containing multiple copies of TatA, TatB and TatC subunits, and a separate TatA complex, containing only TatA subunits. Substrates initially bind to the TatABC complex, which probably triggers association of the separate TatA complex to form the active translocon.

The protein localises to the cell inner membrane. Functionally, part of the twin-arginine translocation (Tat) system that transports large folded proteins containing a characteristic twin-arginine motif in their signal peptide across membranes. TatA could form the protein-conducting channel of the Tat system. This Aromatoleum aromaticum (strain DSM 19018 / LMG 30748 / EbN1) (Azoarcus sp. (strain EbN1)) protein is Sec-independent protein translocase protein TatA.